Here is a 339-residue protein sequence, read N- to C-terminus: Dicamba O-demethylase, oxygenase component (339 aa).

A Rieske domain is found at W8 to I110. [2Fe-2S] cluster contacts are provided by C48, H50, C67, and H70. Residues H159 and H164 each coordinate Fe cation. Positions 229, 250, and 284 each coordinate 3,6-dichloro-2-methoxybenzoate. Residue D293 participates in Fe cation binding.

In terms of assembly, homotrimer. The dicamba O-demethylase multicomponent enzyme system is composed of an oxygenase component (DdmC) and an electron transfer component formed by a ferredoxin reductase (DdmA) and a ferredoxin (DdmB). In vitro, dicamba O-demethylase assays in which DdmA2 is substituted for DdmA1 demonstrate that the two enzymes possess nearly identical activities. Requires [2Fe-2S] cluster as cofactor.

It carries out the reaction 3,6-dichloro-2-methoxybenzoate + 2 reduced [2Fe-2S]-[ferredoxin] + O2 + 2 H(+) = 3,6-dichlorosalicylate + formaldehyde + 2 oxidized [2Fe-2S]-[ferredoxin] + H2O. Its activity is regulated as follows. Activity enhanced by Fe(2+) and Mg(2+) ions. Functionally, component of the dicamba O-demethylase multicomponent enzyme system involved in the degradation of the herbicide dicamba. In vitro, catalyzes the O-demethylation of 2-methoxy-3,6-dichlorobenzoic acid (dicamba) to yield 3,6-dichlorosalicylic acid (DCSA) via an exocyclic monooxygenation. This chain is Dicamba O-demethylase, oxygenase component, found in Stenotrophomonas maltophilia (Pseudomonas maltophilia).